The primary structure comprises 405 residues: MENIMTLPKIKQVRAWFTGGATAEKGAGGGDYHDQGANHWIDDHIATPMSKYRDYEQSRQSFGINVLGTLIVEVEAENGQTGFAVSTAGEMGCFIVEKHLNRFIEGKCVSDIKLIHDQMLNATLYYSGSGGLVMNTISCVDLALWDLFGKVVGLPVYKLLGGAVRDEIQFYATGARPDLAKEMGFIGGKMPTHWGPHDGDAGIRKDAAMVADMREKCGEDFWLMLDCWMSQDVNYAIKLAHACAPYNLKWIEECLPPQQYEGYRELKHNAPAGMMVTSGEHHGTLQSFRTLSETGIDIMQPDVGWCGGLTTLVEIAAIAKSRGQLVVPHGSSVYSHHAVITFTNTPFSEFLMTSPDCSTMRPQFDPILLNEPVPVNGRIHKSVLDKPGFGVELNRDCNLKRPYSH.

2 residues coordinate substrate: histidine 33 and arginine 59. Mg(2+)-binding residues include aspartate 226, glutamate 252, and glutamate 280. The active-site Proton acceptor is the histidine 329. Glutamate 349 is a substrate binding site.

Belongs to the mandelate racemase/muconate lactonizing enzyme family. RhamD subfamily. As to quaternary structure, homooctamer; tetramer of dimers. Requires Mg(2+) as cofactor.

It catalyses the reaction L-rhamnonate = 2-dehydro-3-deoxy-L-rhamnonate + H2O. Catalyzes the dehydration of L-rhamnonate to 2-keto-3-deoxy-L-rhamnonate (KDR). The sequence is that of L-rhamnonate dehydratase from Escherichia coli O6:H1 (strain CFT073 / ATCC 700928 / UPEC).